Here is a 101-residue protein sequence, read N- to C-terminus: Urease subunit beta (101 aa).

This sequence belongs to the urease beta subunit family. In terms of assembly, heterotrimer of UreA (gamma), UreB (beta) and UreC (alpha) subunits. Three heterotrimers associate to form the active enzyme.

It is found in the cytoplasm. The catalysed reaction is urea + 2 H2O + H(+) = hydrogencarbonate + 2 NH4(+). It participates in nitrogen metabolism; urea degradation; CO(2) and NH(3) from urea (urease route): step 1/1. This chain is Urease subunit beta, found in Pseudomonas paraeruginosa (strain DSM 24068 / PA7) (Pseudomonas aeruginosa (strain PA7)).